The following is a 193-amino-acid chain: Orotate phosphoribosyltransferase (193 aa).

114–122 (EDVITTGGS) lines the 5-phospho-alpha-D-ribose 1-diphosphate pocket. T118 and R146 together coordinate orotate.

Belongs to the purine/pyrimidine phosphoribosyltransferase family. PyrE subfamily. Homodimer. The cofactor is Mg(2+).

The enzyme catalyses orotidine 5'-phosphate + diphosphate = orotate + 5-phospho-alpha-D-ribose 1-diphosphate. Its pathway is pyrimidine metabolism; UMP biosynthesis via de novo pathway; UMP from orotate: step 1/2. Functionally, catalyzes the transfer of a ribosyl phosphate group from 5-phosphoribose 1-diphosphate to orotate, leading to the formation of orotidine monophosphate (OMP). This Chlorobaculum parvum (strain DSM 263 / NCIMB 8327) (Chlorobium vibrioforme subsp. thiosulfatophilum) protein is Orotate phosphoribosyltransferase.